The sequence spans 937 residues: MIPPNINVLIRSICINLVTSLPLNFAYIFIHFAVNALREIKRSLIDPMRNLSNWAKGDPCNSNWTGIICFGRSHNDGHFHVRELQLMRLNLSGELAPEVGQLLYLEILDVMWNNLTGRIPLEIGRISSLKLLLLNGNKFTGSLPPELGNLQNLNRLQVDENNITGSVPFSFGNLRSIKHLHLNNNTISGEIPVELSKLPKLVHMILDNNNLTGTLPLELAQLPSLTILQLDNNNFEGSTIPEAYGHFSRLVKLSLRNCGLQGSIPDLSRIENLSYLDLSWNHLTGTIPESKLSDNMTTIELSYNHLTGSIPQSFSDLNSLQLLSLENNSLSGSVPTEIWQDKSFENNKLQVYDLNNNFSDATGNLRTPDNVTLYLRGNPICKSTSIPMVTQFFEYICGEKKQTSTNSNTPCSNVSCPFENVKVSPGICLCTAPLSIDYRLKSPSFFFFTPYIERQFREYITSSLQLETHQLAIDRLVDENRLRPRMYLKLVPKGRITFNKSEVIRIRDRFMSWSFNKTDFFGPYELLDFPLQGPYADLLAQTSGIRTIVWMMIVAGSVVAATVLSVTATLLYVRKRRENSHTLTKKRVFRTISREIKGVKKFSFVELSDATNGFDSSTLIGRGSYGKVYKGILSNKTEVAIKRGEETSLQSEKEFLNEIDLLSRLHHRNLVSLIGYSSDIGEQMLVYEYMPNGNVRDWLSANAADTLSFSMRSHVALGSAKGILYLHTEANPPVIHRDIKTSNILLDCQLHAKVADFGLSRLAPAFGEGDGEPAHVSTVVRGTPGYLDPEYFMTQQLTVRSDVYSFGVVLLELLTGMHPFFEGTHIIREVRTANECGTVLSVADSRMGQCSPDKVKKLAELALWCCEDRPETRPPMSKVVKELEGICQSVREPEMFSETTKLLCSKTSPSSSSVPSPLSLLPGSNLDSGFFHAVKPR.

Positions 1 to 20 are cleaved as a signal peptide; sequence MIPPNINVLIRSICINLVTS. At 21-547 the chain is on the extracellular side; that stretch reads LPLNFAYIFI…LLAQTSGIRT (527 aa). Residues Asn-50, Asn-63, Asn-90, and Asn-114 are each glycosylated (N-linked (GlcNAc...) asparagine). LRR repeat units follow at residues 102–126, 127–150, 152–173, 174–198, 200–222, 223–249, 251–270, and 271–294; these read LLYL…IGRI, SSLK…LGNL, NLNR…SFGN, LRSI…LSKL, KLVH…LAQL, PSLT…HFSR, VKLS…LSRI, and ENLS…KLSD. Residues Asn-162, Asn-184, and Asn-210 are each glycosylated (N-linked (GlcNAc...) asparagine). Residues Asn-272 and Asn-295 are each glycosylated (N-linked (GlcNAc...) asparagine). 3 LRR repeats span residues 296-316, 317-341, and 343-360; these read MTTI…SFSD, LNSL…IWQD, and SFEN…NFSD. Residues Asn-327, Asn-357, Asn-370, Asn-413, Asn-499, and Asn-516 are each glycosylated (N-linked (GlcNAc...) asparagine). A helical membrane pass occupies residues 548-568; that stretch reads IVWMMIVAGSVVAATVLSVTA. Residues 569-937 are Cytoplasmic-facing; sequence TLLYVRKRRE…SGFFHAVKPR (369 aa). The region spanning 614-886 is the Protein kinase domain; that stretch reads FDSSTLIGRG…SKVVKELEGI (273 aa). ATP-binding positions include 620-628 and Lys-642; that span reads IGRGSYGKV. Residue Asp-738 is the Proton acceptor of the active site.

This sequence belongs to the protein kinase superfamily. Ser/Thr protein kinase family.

Its subcellular location is the cell membrane. It carries out the reaction L-seryl-[protein] + ATP = O-phospho-L-seryl-[protein] + ADP + H(+). The catalysed reaction is L-threonyl-[protein] + ATP = O-phospho-L-threonyl-[protein] + ADP + H(+). This chain is Putative leucine-rich repeat receptor-like serine/threonine-protein kinase At3g53590, found in Arabidopsis thaliana (Mouse-ear cress).